A 70-amino-acid polypeptide reads, in one-letter code: Chondroitin proteoglycan 9 (70 aa).

The signal sequence occupies residues 1–19 (MNFWHLLLLAVLFFVTVFG). Residues serine 25 and serine 27 are each glycosylated (O-linked (Xyl...) (chondroitin sulfate) serine).

This Caenorhabditis briggsae protein is Chondroitin proteoglycan 9 (cpg-9).